The primary structure comprises 508 residues: Alpha-amylase (508 aa).

Positions 1–19 (MLSLIIAACCVTVALAGTF) are cleaved as a signal peptide. A disulfide bridge connects residues Cys46 and Cys102. Residues Asn116, Arg173, and Asp182 each coordinate Ca(2+). An intrachain disulfide couples Cys156 to Cys175. Arg210 provides a ligand contact to chloride. Asp212 functions as the Nucleophile in the catalytic mechanism. His216 provides a ligand contact to Ca(2+). Catalysis depends on Glu248, which acts as the Proton donor. Residues Asn311 and Arg349 each coordinate chloride. Cystine bridges form between Cys383–Cys389 and Cys455–Cys467.

This sequence belongs to the glycosyl hydrolase 13 family. In terms of assembly, monomer. Requires Ca(2+) as cofactor. Chloride serves as cofactor.

The catalysed reaction is Endohydrolysis of (1-&gt;4)-alpha-D-glucosidic linkages in polysaccharides containing three or more (1-&gt;4)-alpha-linked D-glucose units.. This Pecten maximus (King scallop) protein is Alpha-amylase.